Here is a 930-residue protein sequence, read N- to C-terminus: Isoleucine--tRNA ligase (930 aa).

The 'HIGH' region signature appears at 57-67 (PYANGNIHVGH). Glu554 is an L-isoleucyl-5'-AMP binding site. Positions 595-599 (KMSKS) match the 'KMSKS' region motif. Lys598 contributes to the ATP binding site. Positions 888, 891, 908, and 911 each coordinate Zn(2+).

The protein belongs to the class-I aminoacyl-tRNA synthetase family. IleS type 1 subfamily. As to quaternary structure, monomer. Requires Zn(2+) as cofactor.

The protein resides in the cytoplasm. It carries out the reaction tRNA(Ile) + L-isoleucine + ATP = L-isoleucyl-tRNA(Ile) + AMP + diphosphate. Catalyzes the attachment of isoleucine to tRNA(Ile). As IleRS can inadvertently accommodate and process structurally similar amino acids such as valine, to avoid such errors it has two additional distinct tRNA(Ile)-dependent editing activities. One activity is designated as 'pretransfer' editing and involves the hydrolysis of activated Val-AMP. The other activity is designated 'posttransfer' editing and involves deacylation of mischarged Val-tRNA(Ile). This is Isoleucine--tRNA ligase from Streptococcus sanguinis (strain SK36).